We begin with the raw amino-acid sequence, 238 residues long: Protein Iojap, chloroplastic (238 aa).

Residues 1-66 constitute a chloroplast transit peptide; it reads MASSTGLTVA…KILTSLSNSR (66 aa).

This sequence belongs to the Iojap/RsfS family. Interacts with chloroplast ribosomal protein uL14c (rpl14).

It is found in the plastid. Its subcellular location is the chloroplast. In terms of biological role, may be a ribosome silencing factor (Potential). Involved in plastid biogenesis. In Arabidopsis thaliana (Mouse-ear cress), this protein is Protein Iojap, chloroplastic (IJ).